A 334-amino-acid chain; its full sequence is Anthranilate phosphoribosyltransferase (334 aa).

5-phospho-alpha-D-ribose 1-diphosphate-binding positions include G81, G84–D85, T89, N91–T94, K109–S117, and A121. Residue G81 coordinates anthranilate. S93 contributes to the Mg(2+) binding site. R167 is an anthranilate binding site. Mg(2+) contacts are provided by D225 and E226.

Belongs to the anthranilate phosphoribosyltransferase family. In terms of assembly, homodimer. The cofactor is Mg(2+).

The catalysed reaction is N-(5-phospho-beta-D-ribosyl)anthranilate + diphosphate = 5-phospho-alpha-D-ribose 1-diphosphate + anthranilate. The protein operates within amino-acid biosynthesis; L-tryptophan biosynthesis; L-tryptophan from chorismate: step 2/5. Functionally, catalyzes the transfer of the phosphoribosyl group of 5-phosphorylribose-1-pyrophosphate (PRPP) to anthranilate to yield N-(5'-phosphoribosyl)-anthranilate (PRA). The protein is Anthranilate phosphoribosyltransferase of Actinobacillus pleuropneumoniae serotype 5b (strain L20).